The sequence spans 387 residues: Succinate--CoA ligase [ADP-forming] subunit beta (387 aa).

The 236-residue stretch at 9-244 (KAIFADNGIP…ITEENPAERE (236 aa)) folds into the ATP-grasp domain. ATP-binding positions include lysine 46, 53 to 55 (GRG), glutamate 99, alanine 102, and glutamate 107. Mg(2+) is bound by residues asparagine 199 and aspartate 213. Residues asparagine 264 and 321 to 323 (GIV) each bind substrate.

This sequence belongs to the succinate/malate CoA ligase beta subunit family. As to quaternary structure, heterotetramer of two alpha and two beta subunits. Mg(2+) serves as cofactor.

The catalysed reaction is succinate + ATP + CoA = succinyl-CoA + ADP + phosphate. It carries out the reaction GTP + succinate + CoA = succinyl-CoA + GDP + phosphate. It functions in the pathway carbohydrate metabolism; tricarboxylic acid cycle; succinate from succinyl-CoA (ligase route): step 1/1. Its function is as follows. Succinyl-CoA synthetase functions in the citric acid cycle (TCA), coupling the hydrolysis of succinyl-CoA to the synthesis of either ATP or GTP and thus represents the only step of substrate-level phosphorylation in the TCA. The beta subunit provides nucleotide specificity of the enzyme and binds the substrate succinate, while the binding sites for coenzyme A and phosphate are found in the alpha subunit. This is Succinate--CoA ligase [ADP-forming] subunit beta from Campylobacter jejuni subsp. jejuni serotype O:6 (strain 81116 / NCTC 11828).